A 265-amino-acid polypeptide reads, in one-letter code: Energy-coupling factor transporter transmembrane protein EcfT (265 aa).

A run of 6 helical transmembrane segments spans residues 26–46 (MVFV…QTYA), 47–67 (VGII…MFLF), 72–92 (PILF…KGGA), 107–127 (VIMG…TTIM), 152–172 (LPVH…PTLM), and 243–263 (HTYD…ILYL).

This sequence belongs to the energy-coupling factor EcfT family. In terms of assembly, forms a stable energy-coupling factor (ECF) transporter complex composed of 2 membrane-embedded substrate-binding proteins (S component), 2 ATP-binding proteins (A component) and 2 transmembrane proteins (T component). May be able to interact with more than 1 S component at a time.

The protein resides in the cell membrane. Its function is as follows. Transmembrane (T) component of an energy-coupling factor (ECF) ABC-transporter complex. Unlike classic ABC transporters this ECF transporter provides the energy necessary to transport a number of different substrates. This Macrococcus caseolyticus (strain JCSC5402) (Macrococcoides caseolyticum) protein is Energy-coupling factor transporter transmembrane protein EcfT.